The chain runs to 349 residues: 4-hydroxythreonine-4-phosphate dehydrogenase (349 aa).

Threonine 135 provides a ligand contact to substrate. Histidine 170, histidine 215, and histidine 276 together coordinate a divalent metal cation. The substrate site is built by lysine 284, asparagine 293, and arginine 302.

It belongs to the PdxA family. Homodimer. A divalent metal cation is required as a cofactor.

Its subcellular location is the cytoplasm. It carries out the reaction 4-(phosphooxy)-L-threonine + NAD(+) = 3-amino-2-oxopropyl phosphate + CO2 + NADH. It participates in cofactor biosynthesis; pyridoxine 5'-phosphate biosynthesis; pyridoxine 5'-phosphate from D-erythrose 4-phosphate: step 4/5. Functionally, catalyzes the NAD(P)-dependent oxidation of 4-(phosphooxy)-L-threonine (HTP) into 2-amino-3-oxo-4-(phosphooxy)butyric acid which spontaneously decarboxylates to form 3-amino-2-oxopropyl phosphate (AHAP). This is 4-hydroxythreonine-4-phosphate dehydrogenase from Synechococcus sp. (strain JA-3-3Ab) (Cyanobacteria bacterium Yellowstone A-Prime).